A 404-amino-acid chain; its full sequence is Floricaula/leafy-like protein FL1 (404 aa).

Residues 210-251 (IGVPEHSSESDERKADTNKQKRRRSKEPGEDGEDRPREHPFI) are disordered. Basic and acidic residues-rich tracts occupy residues 215-228 (HSSESDERKADTNK) and 235-249 (KEPGEDGEDRPREHP). DNA-binding regions lie at residues 246–250 (REHPF), 315–322 (NKPKMRHY), and 386–389 (YVPT).

Belongs to the FLO/LFY family. As to expression, expressed in both male and female cones, vegetative buds and needles, but not in the roots.

It localises to the nucleus. In terms of biological role, probable transcription factor. In Pinus radiata (Monterey pine), this protein is Floricaula/leafy-like protein FL1.